Consider the following 308-residue polypeptide: MSKTAIIFPGQGAQKVGMAQDLFNNNDQATEILTSAAKTLDFDILETMFTDEEGKLGETENTQPALLTHSSALLAALKNLNPDFTMGHSLGEYSSLVAADVLSFEDAVKIVRKRGQLMAQAFPTGVGSMAAVLGLDFDKVDEICKSLSSDDKIIEPANINCPGQIVVSGHKALIDELVEKGKSLGAKRVMPLAVSGPFHSSLMKVIEEDFSSYINQFEWRDAKFPVVQNVNAQGETDKEVIKSNMVKQLYSPVQFINSTEWLIDQGVDHFIEIGPGKVLSGLIKKINRDVKLTSIQTLEDVKGWNEND.

Catalysis depends on residues serine 89 and histidine 199.

It belongs to the FabD family.

The catalysed reaction is holo-[ACP] + malonyl-CoA = malonyl-[ACP] + CoA. It participates in lipid metabolism; fatty acid biosynthesis. This chain is Malonyl CoA-acyl carrier protein transacylase (fabD), found in Staphylococcus aureus (strain Mu50 / ATCC 700699).